Reading from the N-terminus, the 335-residue chain is Glycerol-3-phosphate dehydrogenase [NAD(P)+] (335 aa).

Positions 11, 30, and 106 each coordinate NADPH. Residues Lys106, Gly135, and Ser137 each coordinate sn-glycerol 3-phosphate. Ala139 lines the NADPH pocket. Residues Lys190, Asp243, Ser253, Arg254, and Asn255 each coordinate sn-glycerol 3-phosphate. Lys190 functions as the Proton acceptor in the catalytic mechanism. Arg254 is a binding site for NADPH. NADPH is bound by residues Val278 and Glu280.

This sequence belongs to the NAD-dependent glycerol-3-phosphate dehydrogenase family.

The protein localises to the cytoplasm. The catalysed reaction is sn-glycerol 3-phosphate + NAD(+) = dihydroxyacetone phosphate + NADH + H(+). The enzyme catalyses sn-glycerol 3-phosphate + NADP(+) = dihydroxyacetone phosphate + NADPH + H(+). It participates in membrane lipid metabolism; glycerophospholipid metabolism. Its function is as follows. Catalyzes the reduction of the glycolytic intermediate dihydroxyacetone phosphate (DHAP) to sn-glycerol 3-phosphate (G3P), the key precursor for phospholipid synthesis. This is Glycerol-3-phosphate dehydrogenase [NAD(P)+] from Paucimonas lemoignei (Pseudomonas lemoignei).